A 517-amino-acid chain; its full sequence is Serine hydroxymethyltransferase 2, mitochondrial (517 aa).

The transit peptide at 1–31 (MAMASALRRLSSSSNKPLQRLFNGGHLYSMS) directs the protein to the mitochondrion. Lysine 287 carries the post-translational modification N6-(pyridoxal phosphate)lysine.

It belongs to the SHMT family. As to quaternary structure, homotetramer. Pyridoxal 5'-phosphate is required as a cofactor.

The protein localises to the mitochondrion. It carries out the reaction (6R)-5,10-methylene-5,6,7,8-tetrahydrofolate + glycine + H2O = (6S)-5,6,7,8-tetrahydrofolate + L-serine. It participates in one-carbon metabolism; tetrahydrofolate interconversion. In terms of biological role, catalyzes the interconversion of serine and glycine. The sequence is that of Serine hydroxymethyltransferase 2, mitochondrial from Flaveria pringlei.